We begin with the raw amino-acid sequence, 165 residues long: MRFSAFLTLLLVAFVASCSTFASAESVAEGRRLRADAAPVPVNKDNVAKLAGGFLEKLKTNTALTKAANTIKNSNADEAAVRKAITTFAAAKESAKMSDEGIAKISAMMAGTVQKNPKSWPRLRKFAKVTLGATVAGFAIYGAYKALFDRKSSTAATTTTTTGSA.

An N-terminal signal peptide occupies residues 1–24 (MRFSAFLTLLLVAFVASCSTFASA). A RxLR-dEER motif is present at residues 31-57 (RRLRADAAPVPVNKDNVAKLAGGFLEK). The helical transmembrane segment at 129–149 (VTLGATVAGFAIYGAYKALFD) threads the bilayer.

Belongs to the RxLR effector family.

It localises to the secreted. Its subcellular location is the host mitochondrion membrane. The protein localises to the host endoplasmic reticulum membrane. Effector that enhances P.infestans colonization of Nicotiana benthamiana leaves. The sequence is that of RxLR effector protein PITG_09218 from Phytophthora infestans (strain T30-4) (Potato late blight agent).